A 723-amino-acid chain; its full sequence is Dipeptidyl aminopeptidase BI (723 aa).

A signal peptide spans 1-23 (MKPTSLLLAATVLMSTPITSALA). Residues Ser-574, Asp-659, and His-694 each act as charge relay system in the active site.

This sequence belongs to the peptidase S9A family. Monomer.

With respect to regulation, nearly completely inhibited by 0.5 mM ZnCl(2), 0.1 mM N-tosyl-L-lysyl chloromethyl ketone (TLCK) and 0.1 mM leupeptin. Strongly inhibited by 0.5 mM CoCl(2) and 0.1 mM chymostatin. Activity is hardly affected by general serine protease inhibitors phenylmethanesulfonyl fluoride (PMSF), diisopropyl fluorophosphate (DFP) and N-tosyl-L-phenyl-alanyl chloromethyl ketone (TPCK) or by aspartyl protease inhibitor pepstatin A or by CaCl(2) and EDTA. Cysteine protease inhibitors, such as N-ethylmaleimide (NEM), iodoacetic acid and L-trans-epoxysuccinyl-leucylamido(4-guanido)butane (E-64) have no effect on activity. Functionally, sequentially removes dipeptide units (NH3-P2-P1-) from the amino termini of peptides and proteins. Is able to catalyze the removal of Asp-Arg from the amino termini of angiotensins I and II. Has slight endopeptidase activity on N-terminally blocked peptide derivatives which contain arginine residues at the P1 position. Does not hydrolyze Ala-Ala-Ala and Ala-Ala-Ala-Ala substrates or insulin beta chain. In Pseudoxanthomonas mexicana, this protein is Dipeptidyl aminopeptidase BI.